A 256-amino-acid polypeptide reads, in one-letter code: POU domain class 2-associating factor 1 (256 aa).

The segment at 1–23 is disordered; sequence MLWQKPTAPEQAPAPPRPYQGVR. Positions 16 to 38 constitute an OCA domain; sequence PRPYQGVRVKEPVKELLRRKRGH.

This sequence belongs to the POU2AF family. As to quaternary structure, interacts with POU2F1/OCT1 and POU2F2/OCT2; the interaction increases POU2F1 and POU2F2 transactivation activity. In terms of processing, ubiquitinated; mediated by SIAH1 or SIAH2 and leading to its subsequent proteasomal degradation.

Its subcellular location is the nucleus. In terms of biological role, transcriptional coactivator that specifically associates with either POU2F1/OCT1 or POU2F2/OCT2. It boosts the POU2F1/OCT1 mediated promoter activity and to a lesser extent, that of POU2F2/OCT2. It recognizes the POU domains of POU2F1/OCT1 and POU2F2/OCT2. It is essential for the response of B-cells to antigens and required for the formation of germinal centers. Regulates IL6 expression in B cells as POU2F2/OCT2 coactivator. This is POU domain class 2-associating factor 1 (POU2AF1) from Bos taurus (Bovine).